We begin with the raw amino-acid sequence, 60 residues long: MRKLRGGQTRETRKQKQERREENQKIQQQLKTIVLPICGVVFLCIVAYVFLKTRPRFEEL.

The interval 1-22 is disordered; sequence MRKLRGGQTRETRKQKQERREE. Over residues 8-22 the composition is skewed to basic and acidic residues; it reads QTRETRKQKQERREE. Residues 8 to 34 are a coiled coil; the sequence is QTRETRKQKQERREENQKIQQQLKTIV. Residues 30–50 traverse the membrane as a helical segment; the sequence is LKTIVLPICGVVFLCIVAYVF.

It belongs to the SMCO4 family.

It is found in the membrane. The chain is Single-pass membrane and coiled-coil domain-containing protein 4 homolog from Culex quinquefasciatus (Southern house mosquito).